Reading from the N-terminus, the 269-residue chain is Nitrite transporter NirC (269 aa).

Topologically, residues 1 to 29 are cytoplasmic; the sequence is MFTDTINKCAANAARIARLSANNPLGFWV. The helical transmembrane segment at 30–46 threads the bilayer; that stretch reads SSAMAGAYVGLGIILIF. Topologically, residues 47-58 are extracellular; it reads TLGNLLDPSVRP. A helical transmembrane segment spans residues 59–75; sequence LVMGATFGIALTLVIIA. At 76-107 the chain is on the cytoplasmic side; that stretch reads GSELFTGHTMFLTLGVKAGTISHGQMWAILPQ. Residues 108–125 form a helical membrane-spanning segment; sequence TWLGNLVGSVFVALLYSW. Over 126–153 the chain is Extracellular; that stretch reads GGGSLLPVDTSIVHSVALAKTTAPATVL. The helical transmembrane segment at 154 to 172 threads the bilayer; the sequence is FFKGALCNWLVCLAIWMAI. Residues 173 to 179 lie on the Cytoplasmic side of the membrane; that stretch reads RTEGTAK. The chain crosses the membrane as a helical span at residues 180 to 195; the sequence is FLAIWWCLLAFIASGY. The Extracellular portion of the chain corresponds to 196–230; that stretch reads EHSVANMTLFALSWFGHHSDAYTLAGIGHNLLWVT. Residues 231–250 traverse the membrane as a helical segment; sequence LGNTLSGVVFMGLGYWYATP. Topologically, residues 251–269 are cytoplasmic; that stretch reads KSERPAPAKINQPEAAANN.

This sequence belongs to the FNT transporter (TC 1.A.16) family.

Its subcellular location is the cell inner membrane. Its function is as follows. Catalyzes nitrite uptake and nitrite export across the cytoplasmic membrane. The polypeptide is Nitrite transporter NirC (nirC) (Salmonella typhimurium (strain LT2 / SGSC1412 / ATCC 700720)).